The sequence spans 426 residues: Proline--tRNA ligase (426 aa).

The protein belongs to the class-II aminoacyl-tRNA synthetase family. ProS type 2 subfamily. In terms of assembly, homodimer.

It localises to the cytoplasm. The enzyme catalyses tRNA(Pro) + L-proline + ATP = L-prolyl-tRNA(Pro) + AMP + diphosphate. Its function is as follows. Catalyzes the attachment of proline to tRNA(Pro) in a two-step reaction: proline is first activated by ATP to form Pro-AMP and then transferred to the acceptor end of tRNA(Pro). This Ehrlichia ruminantium (strain Gardel) protein is Proline--tRNA ligase.